The chain runs to 413 residues: Multifunctional CCA protein (413 aa).

ATP-binding residues include G8 and R11. Residues G8 and R11 each coordinate CTP. Mg(2+) is bound by residues D21 and D23. 3 residues coordinate ATP: R91, R143, and R146. R91, R143, and R146 together coordinate CTP. An HD domain is found at T232 to L333.

Belongs to the tRNA nucleotidyltransferase/poly(A) polymerase family. Bacterial CCA-adding enzyme type 1 subfamily. As to quaternary structure, monomer. Can also form homodimers and oligomers. The cofactor is Mg(2+). Requires Ni(2+) as cofactor.

It carries out the reaction a tRNA precursor + 2 CTP + ATP = a tRNA with a 3' CCA end + 3 diphosphate. It catalyses the reaction a tRNA with a 3' CCA end + 2 CTP + ATP = a tRNA with a 3' CCACCA end + 3 diphosphate. Catalyzes the addition and repair of the essential 3'-terminal CCA sequence in tRNAs without using a nucleic acid template. Adds these three nucleotides in the order of C, C, and A to the tRNA nucleotide-73, using CTP and ATP as substrates and producing inorganic pyrophosphate. tRNA 3'-terminal CCA addition is required both for tRNA processing and repair. Also involved in tRNA surveillance by mediating tandem CCA addition to generate a CCACCA at the 3' terminus of unstable tRNAs. While stable tRNAs receive only 3'-terminal CCA, unstable tRNAs are marked with CCACCA and rapidly degraded. The chain is Multifunctional CCA protein from Burkholderia pseudomallei (strain 668).